Reading from the N-terminus, the 670-residue chain is Solute carrier organic anion transporter family member 1A1 (670 aa).

Topologically, residues M1–K20 are cytoplasmic. Residues V21–M40 form a helical membrane-spanning segment. Topologically, residues N41–G59 are extracellular. The chain crosses the membrane as a helical span at residues L60 to G80. Residues T81 to P86 lie on the Cytoplasmic side of the membrane. The helical transmembrane segment at V87–G111 threads the bilayer. At R112–S155 the chain is on the extracellular side. Residues N124 and N135 are each glycosylated (N-linked (GlcNAc...) asparagine). A helical membrane pass occupies residues L156–E184. Residues D185–K203 lie on the Cytoplasmic side of the membrane. The helical transmembrane segment at V204 to I224 threads the bilayer. The Extracellular segment spans residues G225–V242. The chain crosses the membrane as a helical span at residues G243–P267. The Cytoplasmic segment spans residues K268–R311. Residues L312–I333 traverse the membrane as a helical segment. Topologically, residues N334–E353 are extracellular. Residues A354–M377 traverse the membrane as a helical segment. The Cytoplasmic segment spans residues K378–K381. A helical transmembrane segment spans residues I382–H405. The Extracellular portion of the chain corresponds to F406–F513. In terms of domain architecture, Kazal-like spans S433 to Q488. Disulfide bonds link C439-C469, C445-C465, and C454-C486. N492 is a glycosylation site (N-linked (GlcNAc...) asparagine). A helical transmembrane segment spans residues L514–L536. Over R537–S545 the chain is Cytoplasmic. A helical membrane pass occupies residues L546–I571. The Extracellular segment spans residues D572–P605. The helical transmembrane segment at I606–M623 threads the bilayer. The Cytoplasmic portion of the chain corresponds to R624 to L670. Phosphoserine is present on residues S634 and S635. Over residues G645–V654 the composition is skewed to basic and acidic residues. A disordered region spans residues G645–L670.

It belongs to the organo anion transporter (TC 2.A.60) family. As to quaternary structure, binds to PDZK1. Interaction with PDZK1 is required for expression on hepatocyte surface. In terms of processing, glycosylated. Highly expressed in liver and kidney, and at lower levels in brain, lung, skeletal muscle and proximal colon.

The protein localises to the basolateral cell membrane. The enzyme catalyses estrone 3-sulfate(out) + hydrogencarbonate(in) = estrone 3-sulfate(in) + hydrogencarbonate(out). The catalysed reaction is taurocholate(out) + hydrogencarbonate(in) = taurocholate(in) + hydrogencarbonate(out). It carries out the reaction L-thyroxine(out) = L-thyroxine(in). It catalyses the reaction prostaglandin E2(out) = prostaglandin E2(in). The enzyme catalyses 17beta-estradiol 17-O-(beta-D-glucuronate)(out) = 17beta-estradiol 17-O-(beta-D-glucuronate)(in). The catalysed reaction is dehydroepiandrosterone 3-sulfate(out) = dehydroepiandrosterone 3-sulfate(in). Functionally, mediates the Na(+)-independent transport of organic anions such as steroid sulfate conjugates (dehydroepiandrosterone sulfate (DHEAS), 17-beta-glucuronosyl estradiol, estrone-3-sulfate), conjugated (taurocholate) and unconjugated (cholate) bile acids, prostaglandin E2 (PGE2) and L-thyroxine T4. Also capable of transporting sulfobromophthalein (BSP), ouabain and gadoxetate. Hydrogencarbonate/HCO3(-) acts as the probable counteranion that exchanges for organic anions. Shows a pH-sensitive substrate specificity which may be ascribed to the protonation state of the binding site and leads to a stimulation of substrate transport in an acidic microenvironment. In Rattus norvegicus (Rat), this protein is Solute carrier organic anion transporter family member 1A1.